The primary structure comprises 356 residues: tRNA N6-adenosine threonylcarbamoyltransferase (356 aa).

Residues H116 and H120 each coordinate Fe cation. Substrate-binding positions include 139–143 (IVSGG), D174, G187, D191, and N281. D309 contacts Fe cation.

This sequence belongs to the KAE1 / TsaD family. It depends on Fe(2+) as a cofactor.

The protein localises to the cytoplasm. The enzyme catalyses L-threonylcarbamoyladenylate + adenosine(37) in tRNA = N(6)-L-threonylcarbamoyladenosine(37) in tRNA + AMP + H(+). Functionally, required for the formation of a threonylcarbamoyl group on adenosine at position 37 (t(6)A37) in tRNAs that read codons beginning with adenine. Is involved in the transfer of the threonylcarbamoyl moiety of threonylcarbamoyl-AMP (TC-AMP) to the N6 group of A37, together with TsaE and TsaB. TsaD likely plays a direct catalytic role in this reaction. In Frankia casuarinae (strain DSM 45818 / CECT 9043 / HFP020203 / CcI3), this protein is tRNA N6-adenosine threonylcarbamoyltransferase.